Reading from the N-terminus, the 312-residue chain is Ribosomal RNA small subunit methyltransferase H (312 aa).

S-adenosyl-L-methionine-binding positions include 34–36 (GGH), D54, F81, D102, and Q109.

The protein belongs to the methyltransferase superfamily. RsmH family.

It localises to the cytoplasm. It catalyses the reaction cytidine(1402) in 16S rRNA + S-adenosyl-L-methionine = N(4)-methylcytidine(1402) in 16S rRNA + S-adenosyl-L-homocysteine + H(+). Specifically methylates the N4 position of cytidine in position 1402 (C1402) of 16S rRNA. The protein is Ribosomal RNA small subunit methyltransferase H of Geotalea uraniireducens (strain Rf4) (Geobacter uraniireducens).